The primary structure comprises 359 residues: Decorin (359 aa).

Positions Met1–Ala16 are cleaved as a signal peptide. Residues Gly17–Glu30 constitute a propeptide that is removed on maturation. Residue Ser34 is glycosylated (O-linked (Xyl...) (glycosaminoglycan) serine). Cystine bridges form between Cys54–Cys60 and Cys58–Cys67. 12 LRR repeats span residues Asp73–Ile93, Thr94–Ile117, Ser118–Leu141, Lys142–Ile162, Thr163–Leu186, Lys187–Ile212, Thr213–Ile233, Ser234–Ile257, Ser258–Leu281, Thr282–Ile304, Ser305–Val334, and Gln335–Lys359. A glycan (N-linked (GlcNAc...) asparagine) is linked at Asn211. 2 N-linked (GlcNAc...) asparagine glycosylation sites follow: Asn262 and Asn303. Cys313 and Cys346 are oxidised to a cystine.

It belongs to the small leucine-rich proteoglycan (SLRP) family. SLRP class I subfamily. In terms of assembly, binds to type I and type II collagen, fibronectin and TGF-beta. Forms a ternary complex with MFAP2 and ELN. Interacts with DPT. Post-translationally, the attached glycosaminoglycan chain can be either chondroitin sulfate or dermatan sulfate depending upon the tissue of origin. Detected in placenta (at protein level). Detected in cerebrospinal fluid, fibroblasts and urine (at protein level).

Its subcellular location is the secreted. It is found in the extracellular space. It localises to the extracellular matrix. May affect the rate of fibrils formation. This is Decorin (DCN) from Homo sapiens (Human).